The sequence spans 217 residues: Deoxyribose-phosphate aldolase (217 aa).

D89 serves as the catalytic Proton donor/acceptor. K151 functions as the Schiff-base intermediate with acetaldehyde in the catalytic mechanism. K180 (proton donor/acceptor) is an active-site residue.

Belongs to the DeoC/FbaB aldolase family. DeoC type 1 subfamily.

The protein resides in the cytoplasm. The enzyme catalyses 2-deoxy-D-ribose 5-phosphate = D-glyceraldehyde 3-phosphate + acetaldehyde. It functions in the pathway carbohydrate degradation; 2-deoxy-D-ribose 1-phosphate degradation; D-glyceraldehyde 3-phosphate and acetaldehyde from 2-deoxy-alpha-D-ribose 1-phosphate: step 2/2. In terms of biological role, catalyzes a reversible aldol reaction between acetaldehyde and D-glyceraldehyde 3-phosphate to generate 2-deoxy-D-ribose 5-phosphate. The sequence is that of Deoxyribose-phosphate aldolase from Metamycoplasma arthritidis (strain 158L3-1) (Mycoplasma arthritidis).